The following is a 169-amino-acid chain: Calcium-binding protein G (169 aa).

EF-hand domains lie at Lys9 to Gly44, Val60 to Lys83, Ala92 to Asn127, and Asp133 to Ala162. Ca(2+) contacts are provided by Asp105, Asp107, Asp109, Lys111, Glu116, Asp140, Asp142, Asp144, Tyr146, and Glu151.

The polypeptide is Calcium-binding protein G (cbpG) (Dictyostelium discoideum (Social amoeba)).